The primary structure comprises 466 residues: Ribulose bisphosphate carboxylase large chain (466 aa).

Lys5 carries the N6,N6,N6-trimethyllysine modification. Residues Asn114 and Thr164 each coordinate substrate. Lys166 functions as the Proton acceptor in the catalytic mechanism. Position 168 (Lys168) interacts with substrate. The Mg(2+) site is built by Lys192, Asp194, and Glu195. The residue at position 192 (Lys192) is an N6-carboxylysine. His285 (proton acceptor) is an active-site residue. Residues Arg286, His318, and Ser370 each coordinate substrate.

Belongs to the RuBisCO large chain family. Type I subfamily. Heterohexadecamer of 8 large chains and 8 small chains; disulfide-linked. The disulfide link is formed within the large subunit homodimers. Mg(2+) is required as a cofactor. Post-translationally, the disulfide bond which can form in the large chain dimeric partners within the hexadecamer appears to be associated with oxidative stress and protein turnover.

It localises to the plastid. The protein resides in the chloroplast. The catalysed reaction is 2 (2R)-3-phosphoglycerate + 2 H(+) = D-ribulose 1,5-bisphosphate + CO2 + H2O. The enzyme catalyses D-ribulose 1,5-bisphosphate + O2 = 2-phosphoglycolate + (2R)-3-phosphoglycerate + 2 H(+). Functionally, ruBisCO catalyzes two reactions: the carboxylation of D-ribulose 1,5-bisphosphate, the primary event in carbon dioxide fixation, as well as the oxidative fragmentation of the pentose substrate in the photorespiration process. Both reactions occur simultaneously and in competition at the same active site. This chain is Ribulose bisphosphate carboxylase large chain, found in Averrhoa carambola (Star fruit).